The sequence spans 534 residues: Zinc finger protein 397 (534 aa).

Residue S31 is modified to Phosphoserine. The region spanning 50–132 (RQQFRKFCYQ…TLLEDLEREF (83 aa)) is the SCAN box domain. Residues K55, K171, K202, and K252 each participate in a glycyl lysine isopeptide (Lys-Gly) (interchain with G-Cter in SUMO2) cross-link. Residues 197–242 (DISGEKSQRLSQEPSFGGFSEHKSSLEWQQGSAPGETLRRSPSQRA) form a disordered region. 9 consecutive C2H2-type zinc fingers follow at residues 285–307 (YRCD…QRIH), 313–335 (YKCN…QRIH), 341–363 (YECS…RKIH), 369–391 (CKCN…QRIH), 397–419 (YECN…QRIH), 425–447 (YECN…QRIH), 453–475 (YECN…QRIH), 481–503 (YQCN…QRIH), and 509–531 (YICS…QRVH).

The protein belongs to the krueppel C2H2-type zinc-finger protein family.

The protein resides in the nucleus. In terms of biological role, DNA-dependent transcriptional repressor. The sequence is that of Zinc finger protein 397 (ZNF397) from Bos taurus (Bovine).